Reading from the N-terminus, the 57-residue chain is Small ribosomal subunit protein bS21 (57 aa).

The protein belongs to the bacterial ribosomal protein bS21 family.

This chain is Small ribosomal subunit protein bS21, found in Bacillus cytotoxicus (strain DSM 22905 / CIP 110041 / 391-98 / NVH 391-98).